The following is a 67-amino-acid chain: DNA-directed RNA polymerase subunit omega (67 aa).

Belongs to the RNA polymerase subunit omega family. As to quaternary structure, the RNAP catalytic core consists of 2 alpha, 1 beta, 1 beta' and 1 omega subunit. When a sigma factor is associated with the core the holoenzyme is formed, which can initiate transcription.

The catalysed reaction is RNA(n) + a ribonucleoside 5'-triphosphate = RNA(n+1) + diphosphate. Functionally, promotes RNA polymerase assembly. Latches the N- and C-terminal regions of the beta' subunit thereby facilitating its interaction with the beta and alpha subunits. The chain is DNA-directed RNA polymerase subunit omega from Listeria welshimeri serovar 6b (strain ATCC 35897 / DSM 20650 / CCUG 15529 / CIP 8149 / NCTC 11857 / SLCC 5334 / V8).